The chain runs to 2488 residues: Neuron navigator 2 (2488 aa).

Residues 85-192 (GFDTQIYTDW…LFFSLSRYKQ (108 aa)) enclose the Calponin-homology (CH) domain. 3 stretches are compositionally biased toward low complexity: residues 194 to 204 (QQQPQKQHLSS), 221 to 247 (QAGTPQQQVPVTPQAPCQPHQPAPHQQ), and 255 to 267 (QSSASSKDSSQSK). Disordered regions lie at residues 194–675 (QQQP…GSNT) and 706–727 (TEGNVTAESSSTGVSVEPSHFT). Polar residues predominate over residues 299–315 (GGSTTANNRRSQSFNNY). Residues 356–369 (SGSSSTPTNCSTSS) show a composition bias toward low complexity. Residues 384–396 (KSLSVKHSATVSM) show a composition bias toward polar residues. Residues 401 to 410 (PPGPEAPRPT) are compositionally biased toward pro residues. Residues 492–506 (RTFSRALTNKKSSLK) show a composition bias toward polar residues. The stretch at 498–531 (LTNKKSSLKGNEKEKEKQQREKDKEKSKDLAKRA) forms a coiled coil. Residues 507–547 (GNEKEKEKQQREKDKEKSKDLAKRASVTERLDLKEEPKEDP) show a composition bias toward basic and acidic residues. A compositionally biased stretch (low complexity) spans 592 to 606 (MKSMPGKSPSAPAPS). Polar residues predominate over residues 615 to 626 (GKLSSGLPQQKP). Low complexity-rich tracts occupy residues 633-642 (SSSSSSLASS) and 657-675 (SSQTVSGSVGTTQTTGSNT). Polar residues predominate over residues 706 to 719 (TEGNVTAESSSTGV). Positions 743 to 771 (EARRLRTVKNIADLRQNLEETMSSLRGTQ) form a coiled coil. Disordered regions lie at residues 804 to 824 (LSWRLGQSSPRLQAGDAPSMG), 939 to 1151 (LGLG…QSGS), 1177 to 1200 (KSSALVSRSAGRKSSMDGAQNQDD), 1213 to 1283 (YRSL…SDNE), 1295 to 1338 (PAAQ…PIAT), 1355 to 1412 (MTQQ…TNAS), 1440 to 1460 (SLSSGGVPSHNSSTGLIASSK), 1473 to 1560 (VKTT…VTSP), and 1591 to 1629 (SLSNADGQYDPYTDSRFRNSSMSLDEKSRTMSRSGSFRD). Low complexity predominate over residues 939-985 (LGLGDADSWDDSSSVSSGISDTIDNLSTDDINTSSSISSYANTPASS). Residues 1091 to 1102 (KTDDAKVSEKGR) are compositionally biased toward basic and acidic residues. A compositionally biased stretch (polar residues) spans 1130–1142 (PSSSRTPTANANS). Low complexity predominate over residues 1220–1245 (SKSNSRNGAGNRSSTSSIDSNISSKS). A compositionally biased stretch (polar residues) spans 1299-1309 (PVSSPAQTSLQ). Composition is skewed to low complexity over residues 1363–1380 (SPSGSGVLSSGSSSPLYS) and 1388–1404 (SPLASSPSSAHSAPSNS). Polar residues predominate over residues 1440 to 1456 (SLSSGGVPSHNSSTGLI). Over residues 1477 to 1489 (LSESPLSSPAASP) the composition is skewed to low complexity. Residues Ser1480, Ser1484, and Ser1488 each carry the phosphoserine modification. Basic and acidic residues-rich tracts occupy residues 1498–1510 (RKQDSDPHLDRNT) and 1526–1535 (TQEDAKEWLR). The span at 1549-1560 (SPFSSGSSVTSP) shows a compositional bias: low complexity. A coiled-coil region spans residues 1686–1773 (EEKCQSEIRK…AAAQAAINGV (88 aa)). 2 disordered regions span residues 1790 to 1887 (ADLR…LRNS) and 1951 to 1985 (AENDRLKSESQGSGCSRAPSQVSISASPRQSMGLS). Composition is skewed to polar residues over residues 1800–1820 (SDSVSSINSATSHSSVGSNIE), 1875–1887 (NGSTGSTPLLRNS), and 1959–1985 (ESQGSGCSRAPSQVSISASPRQSMGLS). Positions 1897–1964 (MDSEAETVMQ…RLKSESQGSG (68 aa)) form a coiled coil. The residue at position 1977 (Ser1977) is a Phosphoserine. An ATP-binding site is contributed by 2157–2164 (GPSGTGKT). The tract at residues 2423 to 2488 (DGYSMPREGS…ILDSSLESTL (66 aa)) is disordered. Over residues 2460–2473 (YSSPQSYDSDSNSN) the composition is skewed to low complexity.

Belongs to the Nav/unc-53 family. Highly expressed in the brain, kidney and liver. Also expressed in the thyroid, mammary gland, spinal cord, heart, placenta and lung. Abundantly expressed in colon cancers.

The protein resides in the nucleus. It catalyses the reaction ATP + H2O = ADP + phosphate + H(+). Possesses 3' to 5' helicase activity and exonuclease activity. Involved in neuronal development, specifically in the development of different sensory organs. In Homo sapiens (Human), this protein is Neuron navigator 2 (NAV2).